The following is a 318-amino-acid chain: Acetyl-coenzyme A carboxylase carboxyl transferase subunit alpha (318 aa).

The 255-residue stretch at Lys38–Ala292 folds into the CoA carboxyltransferase C-terminal domain.

Belongs to the AccA family. Acetyl-CoA carboxylase is a heterohexamer composed of biotin carboxyl carrier protein (AccB), biotin carboxylase (AccC) and two subunits each of ACCase subunit alpha (AccA) and ACCase subunit beta (AccD).

The protein localises to the cytoplasm. It catalyses the reaction N(6)-carboxybiotinyl-L-lysyl-[protein] + acetyl-CoA = N(6)-biotinyl-L-lysyl-[protein] + malonyl-CoA. Its pathway is lipid metabolism; malonyl-CoA biosynthesis; malonyl-CoA from acetyl-CoA: step 1/1. Functionally, component of the acetyl coenzyme A carboxylase (ACC) complex. First, biotin carboxylase catalyzes the carboxylation of biotin on its carrier protein (BCCP) and then the CO(2) group is transferred by the carboxyltransferase to acetyl-CoA to form malonyl-CoA. The sequence is that of Acetyl-coenzyme A carboxylase carboxyl transferase subunit alpha from Listeria innocua serovar 6a (strain ATCC BAA-680 / CLIP 11262).